A 379-amino-acid polypeptide reads, in one-letter code: TTEGKVIKCKAAIAWEAGKPLSVEEIEVSPPKDHEVRVKIVATGVCRTDEHAINPSFKEGVFPVILGHEGAGIVESIGQGVSKFKPGDKVIPLYMPQCGHCKFCLNPKTNLCEKISKIKTPISDQEVMSDGTSRFTCKGKPIYHFMGTSTFSEYTVVSESSLAKIDAAAPLDKVCLIGCGFSTGYGAAINTAQVEPGSTCAVFGLGGVGLSAVMGCKAAGASKIFGIDINKDKFPLAKKLGATDCLNPQDIRKPVQEIIAEMTNGGVDFAIECIGNPDVMKAAFESTTVGWGTCVIVGVAVGEQSIPFSPMQLIMGRKIKATFFGGWKSVKSVPKLVSDYMAKKFDLDALVSHTLPLDKINDAFDLMNAGKSNRTILVF.

N-acetylthreonine is present on T1. The Zn(2+) site is built by C46, H68, C98, C101, C104, C112, and C179. Residues 204–209 (GLGGVG), D228, K233, 297–299 (VGV), and R374 each bind NAD(+).

Belongs to the zinc-containing alcohol dehydrogenase family. Class-II subfamily. As to quaternary structure, homodimer. Requires Zn(2+) as cofactor.

The protein resides in the cytoplasm. It carries out the reaction all-trans-retinol + NAD(+) = all-trans-retinal + NADH + H(+). The catalysed reaction is 9-cis-retinol + NAD(+) = 9-cis-retinal + NADH + H(+). The enzyme catalyses 20-oxo-(5Z,8Z,11Z,14Z)-eicosatetraenoate + NAD(+) + H2O = (5Z,8Z,11Z,14Z)-eicosatetraenedioate + NADH + 2 H(+). It catalyses the reaction 20-hydroxy-(5Z,8Z,11Z,14Z)-eicosatetraenoate + NAD(+) = 20-oxo-(5Z,8Z,11Z,14Z)-eicosatetraenoate + NADH + H(+). It carries out the reaction 1,4-benzoquinone + NADH + H(+) = hydroquinone + NAD(+). Its activity is regulated as follows. Oxidation of 20-HETE is inhibited by low concentrations of N-heptylformamide. Oxidation of 20-HETE is a decreased by 55-65% by either all-trans-retinol or all-trans-retinoic acid. Strongly inhibited by omega-hydroxy fatty acids. Its function is as follows. Catalyzes the NAD-dependent oxidation of either all-trans-retinol or 9-cis-retinol. Also oxidizes long chain omega-hydroxy fatty acids, such as 20-HETE, producing both the intermediate aldehyde, 20-oxoarachidonate and the end product, a dicarboxylic acid, (5Z,8Z,11Z,14Z)-eicosatetraenedioate. Also catalyzes the reduction of benzoquinones. This Struthio camelus (Common ostrich) protein is All-trans-retinol dehydrogenase [NAD(+)] ADH4.